The chain runs to 3122 residues: tRNA nuclease CdiA-2 (3122 aa).

Residues 36-205 (RAGVVPAWLS…ATLTTGNPNF (170 aa)) form a two-partner system transport domain (TPS) region. A helical membrane pass occupies residues 54 to 74 (VALAVLVAAGVVPIWVNAQVV). Residues 256 to 1254 (VVAGSNQVDY…GGSVAIQASG (999 aa)) are FHA-1. A disordered region spans residues 492–512 (GMTLGGGSLSNQGGRANSQGP). A compositionally biased stretch (polar residues) spans 500–512 (LSNQGGRANSQGP). The segment at 1345–1635 (TRRVMQTSGN…SATAVNVLSN (291 aa)) is receptor binding domain (RBD). A periplasmic FHA-1 repeat (pFR) region spans residues 1790 to 1845 (TAGNIDLKNTQVFTNSGTVKADTTLALQGKQIDNAFGALQSGGLTSLDTTGNVDLT). The interval 1947–2085 (SDTDLNSATG…TERHVYNSRE (139 aa)) is FHA-2. Disordered stretches follow at residues 2002–2031 (TSTI…ALTG), 2151–2174 (TTSQ…MSGG), and 2325–2352 (IGVQ…GSSI). A pretoxin (PT) domain region spans residues 2086-2825 (THSRSGVVSG…SAGAAMASNV (740 aa)). Low complexity-rich tracts occupy residues 2151-2170 (TTSQ…HSGL) and 2325-2341 (IGVQ…MQSS). Positions 2342–2352 (EDQTIQRGSSI) are enriched in polar residues. The interval 2821–3122 (MASNVELYNA…NITIIKPKGN (302 aa)) is C-terminal effector domain (CT), has tRNA nuclease activity. The ELYN C-terminal motif motif lies at 2826 to 2829 (ELYN). Positions 2948–3000 (GATDRTPPSNAILSNSNSDNNSTQGSQSGTVTKTPNPEATGSLSGKPTQIPPL) are disordered. The segment at 2948-3122 (GATDRTPPSN…NITIIKPKGN (175 aa)) is truncated CT domain, has tRNA nuclease activity, sufficient for interaction with CdiI-2. Residues 2953–2994 (TPPSNAILSNSNSDNNSTQGSQSGTVTKTPNPEATGSLSGKP) are compositionally biased toward polar residues. A has tRNase activity region spans residues 2987-3122 (TGSLSGKPTQ…NITIIKPKGN (136 aa)). Catalysis depends on residues E3012, D3039, D3048, and K3067.

This sequence in the N-terminal section; belongs to the CdiA toxin family. As to quaternary structure, interacts with cognate immunity protein CdiI, which blocks its tRNA nuclease activity. The truncated CT fragment (residues 2948-3122) specifically interacts with cognate CdiI which inhibits the tRNA nuclease activity. The truncated CT is more stable in vitro than the original CT fragment characterized in E.coli.

The protein resides in the membrane. The protein localises to the secreted. Its subcellular location is the target cell. It is found in the target cell cytoplasm. Toxic component of a toxin-immunity protein module, which functions as a cellular contact-dependent growth inhibition (CDI) system. CDI modules allow bacteria to communicate with and inhibit the growth of closely related neighboring bacteria in a contact-dependent fashion. The C-terminal 301 residues (the CT fragment) cleaves near the C-terminus of E.coli tRNA1B(Ala), probably preventing tRNA charging, and inhibits growth in E.coli. A truncated CT fragment (residues 2948-3122) has tRNA endonuclease activity on several B.thailandensis tRNAs as well as tRNA2(Arg) where it cleaves after A-70 and U-71. Inactive CT domain binds tRNA, probably in a 1:1 complex. Toxic activity is neutralized by coexpression of the cognate immunity protein CdiI in E.coli, but not by non-cognate immunity proteins from other strains of B.pseudomallei. May use lipopolysaccharide as its target cell receptor. Probably gains access to the cytoplasm of target cells (B.thailandensis strain E264) by using integral inner membrane protein BTH_II0599. Protein BTH_I0359 is also implicated in an unknown fashion in CDI in B.thailandensis strain E264. Functionally, expression of this cdiAIB locus in B.thailandensis confers protection against other bacteria carrying the locus; growth inhibition requires cellular contact. In terms of biological role, the CdiA protein is thought to be exported from the cell through the central lumen of CdiB, the other half of its two-partner system (TPS). The TPS domain probably remains associated with CdiB while the FHA-1 domain forms an extended filament with the receptor-binding domain (RBD) at its extremity; in the secretion arrested state the C-terminus of the RBD domain form a hairpin-like structure as the FHA-2, PT and CT domains are periplasmic. Upon binding to a target cell outer membrane receptor (possibly a lipoprotein in this CDI) a signal is transmitted to activate secretion. The filament elongates slightly, the rest of CdiA is secreted and the FHA-2 domain becomes stably associated with the target cell's outer membrane where it facilitates entry of the toxic CT domain into the target cell periplasm. From there the toxic CT domain is cleaved and gains access to the target cell cytoplasm via an inner membrane protein (probably inner membrane protein BTH_II0599). The polypeptide is tRNA nuclease CdiA-2 (cdiA2) (Burkholderia pseudomallei (strain 1026b)).